We begin with the raw amino-acid sequence, 260 residues long: Indole-3-glycerol phosphate synthase (260 aa).

Belongs to the TrpC family.

It catalyses the reaction 1-(2-carboxyphenylamino)-1-deoxy-D-ribulose 5-phosphate + H(+) = (1S,2R)-1-C-(indol-3-yl)glycerol 3-phosphate + CO2 + H2O. It functions in the pathway amino-acid biosynthesis; L-tryptophan biosynthesis; L-tryptophan from chorismate: step 4/5. This Staphylococcus aureus (strain MSSA476) protein is Indole-3-glycerol phosphate synthase.